We begin with the raw amino-acid sequence, 272 residues long: Small ribosomal subunit protein uS2 (272 aa).

Residues 224-233 (EGKKAREERQ) are compositionally biased toward basic and acidic residues. The tract at residues 224-272 (EGKKAREERQLAAAKDAAGDAKPEAEEAPAAAEAEEAPAAEAEEAPAAE) is disordered. Residues 256–272 (EAEEAPAAEAEEAPAAE) show a composition bias toward acidic residues.

It belongs to the universal ribosomal protein uS2 family.

This chain is Small ribosomal subunit protein uS2, found in Corynebacterium glutamicum (strain ATCC 13032 / DSM 20300 / JCM 1318 / BCRC 11384 / CCUG 27702 / LMG 3730 / NBRC 12168 / NCIMB 10025 / NRRL B-2784 / 534).